The sequence spans 238 residues: Aspartate/glutamate leucyltransferase (238 aa).

Belongs to the R-transferase family. Bpt subfamily.

It is found in the cytoplasm. It carries out the reaction N-terminal L-glutamyl-[protein] + L-leucyl-tRNA(Leu) = N-terminal L-leucyl-L-glutamyl-[protein] + tRNA(Leu) + H(+). It catalyses the reaction N-terminal L-aspartyl-[protein] + L-leucyl-tRNA(Leu) = N-terminal L-leucyl-L-aspartyl-[protein] + tRNA(Leu) + H(+). Functionally, functions in the N-end rule pathway of protein degradation where it conjugates Leu from its aminoacyl-tRNA to the N-termini of proteins containing an N-terminal aspartate or glutamate. This is Aspartate/glutamate leucyltransferase from Aeromonas hydrophila subsp. hydrophila (strain ATCC 7966 / DSM 30187 / BCRC 13018 / CCUG 14551 / JCM 1027 / KCTC 2358 / NCIMB 9240 / NCTC 8049).